Reading from the N-terminus, the 123-residue chain is Large ribosomal subunit protein uL14 (123 aa).

The protein belongs to the universal ribosomal protein uL14 family. In terms of assembly, part of the 50S ribosomal subunit. Forms a cluster with proteins L3 and L19. In the 70S ribosome, L14 and L19 interact and together make contacts with the 16S rRNA in bridges B5 and B8.

Binds to 23S rRNA. Forms part of two intersubunit bridges in the 70S ribosome. The chain is Large ribosomal subunit protein uL14 from Serratia proteamaculans (strain 568).